The chain runs to 241 residues: Zinc finger CCHC domain-containing protein 24 (241 aa).

A phosphoserine mark is found at S65 and S93. A CCHC-type zinc finger spans residues 132-149; it reads YLCHLCFNKGHYIKDCPQ.

In Macaca fascicularis (Crab-eating macaque), this protein is Zinc finger CCHC domain-containing protein 24 (ZCCHC24).